We begin with the raw amino-acid sequence, 548 residues long: Membrane protein insertase YidC (548 aa).

The helical transmembrane segment at 6–26 (NLLVIALLFVSFMIWQAWEQD) threads the bilayer. The segment at 28–55 (NPQPQAQQTTQTTTTAAGSAADQGVPAS) is disordered. The span at 30-50 (QPQAQQTTQTTTTAAGSAADQ) shows a compositional bias: low complexity. Transmembrane regions (helical) follow at residues 350 to 370 (FVGNWGFSIIIITFIVRGIMY), 420 to 440 (LGGCFPLLIQMPIFLALYYML), 458 to 478 (LSAQDPYYILPILMGVTMFFI), and 499 to 519 (PVIFTVFFLWFPSGLVLYYIV).

It belongs to the OXA1/ALB3/YidC family. Type 1 subfamily. As to quaternary structure, interacts with the Sec translocase complex via SecD. Specifically interacts with transmembrane segments of nascent integral membrane proteins during membrane integration.

It localises to the cell inner membrane. In terms of biological role, required for the insertion and/or proper folding and/or complex formation of integral membrane proteins into the membrane. Involved in integration of membrane proteins that insert both dependently and independently of the Sec translocase complex, as well as at least some lipoproteins. Aids folding of multispanning membrane proteins. The protein is Membrane protein insertase YidC of Shigella boydii serotype 18 (strain CDC 3083-94 / BS512).